The primary structure comprises 320 residues: MSELFWFEKYRPRSFDEVVDLEEVKSRLREFVKSGNMPHLLFYGPPGTGKTTMALVLARELYGEYWRENTLELNASDERGINVIRERVKEFARTAPVGKAPFKLVILDEADNMTSDAQQALRRIMEIYAQNTRFILLANYISGIIEPIQSRVVMIRFNPLPKEAVISRLRYIAENEGVKISDDALETIYEFTQGDMRKAINALQIAAATEKEITEDVVARALGMVSPRLLRETLQEALKGNFSKAMTQIYGFVVDGGVGELEIIRQIHREVLRLDVPEYVKPELAYIIAEAHYATLRGARGLTQIFGALAKIRRLLKQAV.

ATP is bound at residue 44–51 (GPPGTGKT).

Belongs to the activator 1 small subunits family. RfcS subfamily. Heteromultimer composed of small subunits (RfcS) and large subunits (RfcL).

Its function is as follows. Part of the RFC clamp loader complex which loads the PCNA sliding clamp onto DNA. This is Replication factor C small subunit 2 from Pyrobaculum islandicum (strain DSM 4184 / JCM 9189 / GEO3).